The chain runs to 780 residues: Nuclear cap-binding protein subunit 1 (780 aa).

The tract at residues 1 to 25 (MSSYRGSTRPRKRTREGENYGFRPH) is disordered. The residue at position 29 (serine 29) is a Phosphoserine. Residues 34 to 249 (AARIKKDITF…KQLILSREND (216 aa)) form the MIF4G domain. Residues 738–780 (ANEPVQENTSEEQEDTKMQPVDAVDEQPSENNQTAADATNEEK) are disordered.

The protein belongs to the NCBP1 family. In terms of assembly, component of the nuclear cap-binding complex (CBC), a heterodimer composed of cbc1 and cbc2 that interacts with capped RNAs.

The protein localises to the cytoplasm. It is found in the perinuclear region. Its subcellular location is the nucleus. Functionally, component of the CBC complex, which binds cotranscriptionally to the 5'-cap of pre-mRNAs and is involved in maturation, export and degradation of nuclear mRNAs. The polypeptide is Nuclear cap-binding protein subunit 1 (cbc1) (Schizosaccharomyces pombe (strain 972 / ATCC 24843) (Fission yeast)).